Here is an 87-residue protein sequence, read N- to C-terminus: Small ribosomal subunit protein bS20 (87 aa).

The interval 1–22 (MAHHKSAIKRIKQNAKKNARNR) is disordered.

The protein belongs to the bacterial ribosomal protein bS20 family.

Binds directly to 16S ribosomal RNA. This Pelobacter propionicus (strain DSM 2379 / NBRC 103807 / OttBd1) protein is Small ribosomal subunit protein bS20.